Reading from the N-terminus, the 263-residue chain is Protein MARD1 (263 aa).

An FLZ-type zinc finger spans residues 219–263; the sequence is SFLSRCFTCKKNLDQKQDIYIYRGEKGFCSSECRYQEMLLDQMET.

The protein belongs to the FLZ family. As to quaternary structure, interacts with KIN10 and KIN11 via its FLZ-type zinc finger domain. Interacts with KINB1 and KINB2 via its N-terminal part. Interacts with TZF4, TZF5 and TZF6. Interacts with MPK3 and MPK6.

Its subcellular location is the cytoplasm. It is found in the stress granule. It localises to the P-body. May act as an adapter to facilitate the interaction of SnRK1 complex with effector proteins, conferring tissue- and stimulus-type specific differences in the SnRK1 regulation pathway. Involved in seed dormancy control. In Arabidopsis thaliana (Mouse-ear cress), this protein is Protein MARD1.